A 337-amino-acid chain; its full sequence is Tetraacyldisaccharide 4'-kinase (337 aa).

Residue 51–58 (HLGGAGKT) participates in ATP binding.

It belongs to the LpxK family.

The catalysed reaction is a lipid A disaccharide + ATP = a lipid IVA + ADP + H(+). It functions in the pathway glycolipid biosynthesis; lipid IV(A) biosynthesis; lipid IV(A) from (3R)-3-hydroxytetradecanoyl-[acyl-carrier-protein] and UDP-N-acetyl-alpha-D-glucosamine: step 6/6. Functionally, transfers the gamma-phosphate of ATP to the 4'-position of a tetraacyldisaccharide 1-phosphate intermediate (termed DS-1-P) to form tetraacyldisaccharide 1,4'-bis-phosphate (lipid IVA). This Nitrobacter winogradskyi (strain ATCC 25391 / DSM 10237 / CIP 104748 / NCIMB 11846 / Nb-255) protein is Tetraacyldisaccharide 4'-kinase.